The sequence spans 146 residues: 3-dehydroquinate dehydratase (146 aa).

Tyrosine 23 functions as the Proton acceptor in the catalytic mechanism. 3 residues coordinate substrate: asparagine 75, histidine 81, and aspartate 88. Catalysis depends on histidine 101, which acts as the Proton donor. Substrate contacts are provided by residues 102–103 and arginine 112; that span reads LS.

This sequence belongs to the type-II 3-dehydroquinase family. Homododecamer.

The enzyme catalyses 3-dehydroquinate = 3-dehydroshikimate + H2O. It functions in the pathway metabolic intermediate biosynthesis; chorismate biosynthesis; chorismate from D-erythrose 4-phosphate and phosphoenolpyruvate: step 3/7. Its function is as follows. Catalyzes a trans-dehydration via an enolate intermediate. The sequence is that of 3-dehydroquinate dehydratase from Marinobacter nauticus (strain ATCC 700491 / DSM 11845 / VT8) (Marinobacter aquaeolei).